The chain runs to 367 residues: MTPSTLPIDQYDAQLAEKTGRLKAMMASYHAPEPQVFRSPVSHYRMRAEFRIWHDGDDLYHIMFDQQTKHRIRVDQFPVASELINRLMPALLNALRPHLTLRRKLFQIDYLSTMSNEIVVSLLYHKTLDDEWRQQAIALRDQLRQQGFNLQLIGRATKTKICLDHDYVDECLPVAGKQMVYRQVENSFTQPNAAMNIQMLEWALSVTEGSKGDLLELYCGNGNFSLALARNFERVLATEIAKPSVQAAQYNITANQIGNVQIIRMAAEEFTQAMRGVRQFNRLEGIDLASYRCDTIFVDPPRSGLDEETVRLVQEYPRILYISCNPETLCANLATLTQTHRVSQLALFDQFPYTHHMECGVLLEKRT.

Residues glutamine 190, tyrosine 218, asparagine 223, glutamate 239, and aspartate 299 each contribute to the S-adenosyl-L-methionine site. Residue cysteine 324 is the Nucleophile of the active site. Glutamate 358 serves as the catalytic Proton acceptor.

This sequence belongs to the class I-like SAM-binding methyltransferase superfamily. RNA M5U methyltransferase family. TrmA subfamily.

It carries out the reaction uridine(54) in tRNA + S-adenosyl-L-methionine = 5-methyluridine(54) in tRNA + S-adenosyl-L-homocysteine + H(+). The catalysed reaction is uridine(341) in tmRNA + S-adenosyl-L-methionine = 5-methyluridine(341) in tmRNA + S-adenosyl-L-homocysteine + H(+). In terms of biological role, dual-specificity methyltransferase that catalyzes the formation of 5-methyluridine at position 54 (m5U54) in all tRNAs, and that of position 341 (m5U341) in tmRNA (transfer-mRNA). This is tRNA/tmRNA (uracil-C(5))-methyltransferase from Musicola paradisiaca (strain Ech703) (Dickeya paradisiaca).